An 89-amino-acid chain; its full sequence is Large ribosomal subunit protein bL27 (89 aa).

The tract at residues Met-1–Leu-21 is disordered.

Belongs to the bacterial ribosomal protein bL27 family.

In Novosphingobium aromaticivorans (strain ATCC 700278 / DSM 12444 / CCUG 56034 / CIP 105152 / NBRC 16084 / F199), this protein is Large ribosomal subunit protein bL27.